Consider the following 311-residue polypeptide: Homeobox-leucine zipper protein ATHB-6 (311 aa).

A compositionally biased stretch (polar residues) spans 1 to 10 (MMKRLSSSDS). Residues 1-32 (MMKRLSSSDSVGGLISLCPTTSTDEQSPRRYG) form a disordered region. An interaction with ABI1 region spans residues 1–43 (MMKRLSSSDSVGGLISLCPTTSTDEQSPRRYGGREFQSMLEGY). Residues 59-118 (LSEKKRRLSINQVKALEKNFELENKLEPERKVKLAQELGLQPRQVAVWFQNRRARWKTKQ) constitute a DNA-binding region (homeobox). The segment at 119 to 154 (LEKDYGVLKTQYDSLRHNFDSLRRDNESLLQEISKL) is leucine-zipper. Residues 157–183 (KLNGGGGEEEEEENNAAVTTESDISVK) form a disordered region. The tract at residues 218–311 (LRDLLPLKAA…HWYSTVDHWN (94 aa)) is interaction with ABI1.

It belongs to the HD-ZIP homeobox family. Class I subfamily. As to quaternary structure, interacts with ABI1. Phosphorylated by PKA. Reversible inactivation of the binding to DNA by phosphorylation. As to expression, widely expressed.

It localises to the nucleus. Its function is as follows. Transcription activator that may act as growth regulators in response to water deficit. Interacts with the core sequence 5'-CAATTATTA-3' of promoters in response to ABA and in an ABI1-dependent manner. Involved in the negative regulation of the ABA signaling pathway. This is Homeobox-leucine zipper protein ATHB-6 (ATHB-6) from Arabidopsis thaliana (Mouse-ear cress).